We begin with the raw amino-acid sequence, 329 residues long: Beta-ketoacyl-[acyl-carrier-protein] synthase III (329 aa).

Active-site residues include Cys-123 and His-256. Residues 257 to 261 form an ACP-binding region; the sequence is QANIR. Asn-286 is a catalytic residue.

It belongs to the thiolase-like superfamily. FabH family. Homodimer.

It is found in the cytoplasm. It carries out the reaction malonyl-[ACP] + acetyl-CoA + H(+) = 3-oxobutanoyl-[ACP] + CO2 + CoA. It functions in the pathway lipid metabolism; fatty acid biosynthesis. Catalyzes the condensation reaction of fatty acid synthesis by the addition to an acyl acceptor of two carbons from malonyl-ACP. Catalyzes the first condensation reaction which initiates fatty acid synthesis and may therefore play a role in governing the total rate of fatty acid production. Possesses both acetoacetyl-ACP synthase and acetyl transacylase activities. Its substrate specificity determines the biosynthesis of branched-chain and/or straight-chain of fatty acids. This Paraburkholderia phymatum (strain DSM 17167 / CIP 108236 / LMG 21445 / STM815) (Burkholderia phymatum) protein is Beta-ketoacyl-[acyl-carrier-protein] synthase III.